A 468-amino-acid chain; its full sequence is Phosphoglucosamine mutase (468 aa).

Residue Ser112 is the Phosphoserine intermediate of the active site. Mg(2+)-binding residues include Ser112, Asp254, Asp256, and Asp258. Phosphoserine is present on Ser112.

It belongs to the phosphohexose mutase family. Mg(2+) serves as cofactor. In terms of processing, activated by phosphorylation.

The catalysed reaction is alpha-D-glucosamine 1-phosphate = D-glucosamine 6-phosphate. Its function is as follows. Catalyzes the conversion of glucosamine-6-phosphate to glucosamine-1-phosphate. The chain is Phosphoglucosamine mutase from Prochlorococcus marinus (strain MIT 9313).